The chain runs to 100 residues: Urease subunit gamma (100 aa).

It belongs to the urease gamma subunit family. In terms of assembly, heterotrimer of UreA (gamma), UreB (beta) and UreC (alpha) subunits. Three heterotrimers associate to form the active enzyme.

The protein resides in the cytoplasm. It carries out the reaction urea + 2 H2O + H(+) = hydrogencarbonate + 2 NH4(+). The protein operates within nitrogen metabolism; urea degradation; CO(2) and NH(3) from urea (urease route): step 1/1. The polypeptide is Urease subunit gamma (Picosynechococcus sp. (strain ATCC 27264 / PCC 7002 / PR-6) (Agmenellum quadruplicatum)).